The chain runs to 132 residues: Protein NrdI (132 aa).

This sequence belongs to the NrdI family.

In terms of biological role, probably involved in ribonucleotide reductase function. The sequence is that of Protein NrdI from Bartonella henselae (strain ATCC 49882 / DSM 28221 / CCUG 30454 / Houston 1) (Rochalimaea henselae).